A 179-amino-acid polypeptide reads, in one-letter code: Large ribosomal subunit protein uL5 (179 aa).

This sequence belongs to the universal ribosomal protein uL5 family. As to quaternary structure, part of the 50S ribosomal subunit; part of the 5S rRNA/L5/L18/L25 subcomplex. Contacts the 5S rRNA and the P site tRNA. Forms a bridge to the 30S subunit in the 70S ribosome.

Functionally, this is one of the proteins that bind and probably mediate the attachment of the 5S RNA into the large ribosomal subunit, where it forms part of the central protuberance. In the 70S ribosome it contacts protein S13 of the 30S subunit (bridge B1b), connecting the 2 subunits; this bridge is implicated in subunit movement. Contacts the P site tRNA; the 5S rRNA and some of its associated proteins might help stabilize positioning of ribosome-bound tRNAs. This Oceanobacillus iheyensis (strain DSM 14371 / CIP 107618 / JCM 11309 / KCTC 3954 / HTE831) protein is Large ribosomal subunit protein uL5.